A 376-amino-acid chain; its full sequence is Putative E3 ubiquitin-protein ligase XBAT34 (376 aa).

ANK repeat units lie at residues 41–71 and 77–106; these read LGRT…NVNA and NGGT…NPLV. Residues 325 to 364 form an RING-type zinc finger; that stretch reads CVICVDAPSEAVCVPCGHVAGCISCLKEIENKKMGCPVCR.

The enzyme catalyses S-ubiquitinyl-[E2 ubiquitin-conjugating enzyme]-L-cysteine + [acceptor protein]-L-lysine = [E2 ubiquitin-conjugating enzyme]-L-cysteine + N(6)-ubiquitinyl-[acceptor protein]-L-lysine.. Its pathway is protein modification; protein ubiquitination. No E3 ubiquitin-protein ligase activity observed when associated with the E2 enzyme UBC8 in vitro. This is Putative E3 ubiquitin-protein ligase XBAT34 (XBAT34) from Arabidopsis thaliana (Mouse-ear cress).